The primary structure comprises 240 residues: Type II restriction enzyme DdeI (240 aa).

The enzyme catalyses Endonucleolytic cleavage of DNA to give specific double-stranded fragments with terminal 5'-phosphates.. In terms of biological role, a P subtype restriction enzyme that recognizes the double-stranded sequence 5'-CTNAG-3' and cleaves after C-1. The sequence is that of Type II restriction enzyme DdeI (ddeIR) from Desulfomicrobium norvegicum (strain DSM 1741 / NCIMB 8310) (Desulfovibrio baculatus (strain Norway 4)).